The sequence spans 82 residues: Acyl carrier protein (82 aa).

The Carrier domain occupies 3–81 (SSEQEILAGL…DAVTYIAGAQ (79 aa)). S41 is subject to O-(pantetheine 4'-phosphoryl)serine.

Belongs to the acyl carrier protein (ACP) family. Post-translationally, 4'-phosphopantetheine is transferred from CoA to a specific serine of apo-ACP by AcpS. This modification is essential for activity because fatty acids are bound in thioester linkage to the sulfhydryl of the prosthetic group.

It localises to the cytoplasm. It functions in the pathway lipid metabolism; fatty acid biosynthesis. Its function is as follows. Carrier of the growing fatty acid chain in fatty acid biosynthesis. The protein is Acyl carrier protein of Beutenbergia cavernae (strain ATCC BAA-8 / DSM 12333 / CCUG 43141 / JCM 11478 / NBRC 16432 / NCIMB 13614 / HKI 0122).